The chain runs to 100 residues: Small ribosomal subunit protein uS14 (100 aa).

Belongs to the universal ribosomal protein uS14 family. Part of the 30S ribosomal subunit. Contacts proteins S3 and S10.

In terms of biological role, binds 16S rRNA, required for the assembly of 30S particles and may also be responsible for determining the conformation of the 16S rRNA at the A site. The protein is Small ribosomal subunit protein uS14 of Prochlorococcus marinus (strain NATL2A).